Reading from the N-terminus, the 122-residue chain is Large ribosomal subunit protein uL14 (122 aa).

It belongs to the universal ribosomal protein uL14 family. As to quaternary structure, part of the 50S ribosomal subunit. Forms a cluster with proteins L3 and L19. In the 70S ribosome, L14 and L19 interact and together make contacts with the 16S rRNA in bridges B5 and B8.

Functionally, binds to 23S rRNA. Forms part of two intersubunit bridges in the 70S ribosome. This is Large ribosomal subunit protein uL14 from Neisseria gonorrhoeae (strain ATCC 700825 / FA 1090).